The chain runs to 260 residues: Sphinganine C4-monooxygenase 1 (260 aa).

Helical transmembrane passes span 11–31 (LLGT…YVAL), 55–75 (SVVK…ILLF), and 92–112 (FLVL…WQYF). The 137-residue stretch at 99 to 235 (FVTAMIVLDT…FVMWDRILGT (137 aa)) folds into the Fatty acid hydroxylase domain. Positions 114–118 (HRYMH) match the Histidine box-1 motif. Residues 128–132 (HSQHH) carry the Histidine box-2 motif. The short motif at 207–213 (YHDIHHQ) is the Histidine box-3 element.

It belongs to the sterol desaturase family. Fe cation serves as cofactor. Ubiquitous, with higher levels in flowers and roots.

The protein resides in the endoplasmic reticulum membrane. The catalysed reaction is a dihydroceramide + 2 Fe(II)-[cytochrome b5] + O2 + 2 H(+) = a phytoceramide + 2 Fe(III)-[cytochrome b5] + H2O. Its pathway is membrane lipid metabolism; sphingolipid biosynthesis. In terms of biological role, involved in sphingolipid trihydroxy long-chain base (4-hydroxysphinganine) biosynthesis. Can use C18- and C20-sphinganine as substrates to produce C18- and C20-phytosphinganines (D-ribo-2-amino-1,3,4-trihydroxyoctadecane and -eicosane). This Arabidopsis thaliana (Mouse-ear cress) protein is Sphinganine C4-monooxygenase 1 (SBH1).